We begin with the raw amino-acid sequence, 581 residues long: MALRYDGLDELPAACLSPCGPPNPAELYSEERRLALEELLAGGPGAFSAFLRRERLGRFLNPDEVRSILRAAERPGEEGAAAGAEDSFGSSHDCSSGTYFPEQSDLEPPLLELGWPAFYQGAYRGATRVEAHFQPRGAGAGGPYGCKDALRQQLRLAREVIAVVMDVFTDIDIFRDLQEISRKQGVAVYILLDQALLSQFLDMCMDLKVHPEEEKLMTVRTITGNIYYARSGTKIVGKVHEKFTLIDGIRVATGSYSFTWTDGKLNSSNLVILSGQVVEHFDLEFRILYAQSKPISSKLLSSFRISGRFDHLVDQKPLSKELTLGNLLRLRLARLSSTPRKVELGGEEGRAEAVCGASKTSTISEEDYFSSRKDRLEGRRVTDAATQTEPGETPAVSMSDVGTQASAATACTGTQTTVATRVVSSQTVVPTTSATTQTDVDEGVLASPGSQSKEGSPVSKMSVSRSSSLRSSSSLSSQGSVASSIGSQTSFRSTDFATPGPPKYQSTPHFDLCFRDSLRNLNKERQFHFAGIRSRLNHMLAMLSRKTFLTENYLSFNSGSFARSSANLLAVREIMLYPSYQ.

The tract at residues 1–297 is DUF1669; it reads MALRYDGLDE…LYAQSKPISS (297 aa). The tract at residues 75–101 is disordered; it reads PGEEGAAAGAEDSFGSSHDCSSGTYFP. Residues 88-98 show a composition bias toward polar residues; the sequence is FGSSHDCSSGT. Serine 296 carries the post-translational modification Phosphoserine. The interval 338-581 is required for interaction with KIF22 and function in chromosome congression; that stretch reads TPRKVELGGE…REIMLYPSYQ (244 aa). Disordered regions lie at residues 366–401 and 426–503; these read EDYFSSRKDRLEGRRVTDAATQTEPGETPAVSMSDV and QTVV…GPPK. The span at 369 to 382 shows a compositional bias: basic and acidic residues; that stretch reads FSSRKDRLEGRRVT. Low complexity predominate over residues 426–438; that stretch reads QTVVPTTSATTQT. Serine 456 bears the Phosphoserine mark. Positions 462-488 are enriched in low complexity; sequence SVSRSSSLRSSSSLSSQGSVASSIGSQ. Phosphothreonine is present on threonine 507.

It belongs to the FAM83 family. As to quaternary structure, interacts with FBXW7; promotes FBXW7 degradation. May interact with RAF1. Interacts with KIF22; recruits KIF22 to mitotic spindle microtubules. Interacts (via C-terminus) with DYNLL1. Interacts with HMMR. Directly interacts (via DUF1669) with CSNK1A1 and CSNK1A1L. In terms of processing, phosphorylated during mitosis.

It localises to the cytoplasm. The protein localises to the cytoskeleton. It is found in the spindle. Its subcellular location is the spindle pole. Through the degradation of FBXW7, may act indirectly on the expression and downstream signaling of MTOR, JUN and MYC. May play also a role in cell proliferation through activation of the ERK1/ERK2 signaling cascade. May also be important for proper chromosome congression and alignment during mitosis through its interaction with KIF22. The chain is Protein FAM83D from Bos taurus (Bovine).